The sequence spans 209 residues: Large ribosomal subunit protein uL3 (209 aa).

Residues 133–153 (THGNSLSHRVPGSIGQNQTPG) are disordered. An N5-methylglutamine modification is found at Gln-150.

This sequence belongs to the universal ribosomal protein uL3 family. Part of the 50S ribosomal subunit. Forms a cluster with proteins L14 and L19. Post-translationally, methylated by PrmB.

Functionally, one of the primary rRNA binding proteins, it binds directly near the 3'-end of the 23S rRNA, where it nucleates assembly of the 50S subunit. In Pectobacterium carotovorum subsp. carotovorum (strain PC1), this protein is Large ribosomal subunit protein uL3.